The primary structure comprises 28 residues: Potassium channel toxin alpha-KTx 9.3 (28 aa).

Cystine bridges form between Cys-3-Cys-19, Cys-6-Cys-24, and Cys-10-Cys-26.

It belongs to the short scorpion toxin superfamily. Potassium channel inhibitor family. Alpha-KTx 09 subfamily. Expressed by the venom gland.

It is found in the secreted. Inhibits voltage-gated potassium channels. This is Potassium channel toxin alpha-KTx 9.3 from Aegaeobuthus nigrocinctus (Scorpion).